We begin with the raw amino-acid sequence, 536 residues long: Lysosomal acid glucosylceramidase (536 aa).

The signal sequence occupies residues 1 to 39 (MELSSPSREEYPMPRGRVGIMAASLMGLLLLHTVSWVSG). Cystine bridges form between Cys43/Cys55 and Cys57/Cys62. N-linked (GlcNAc...) asparagine glycans are attached at residues Asn58, Asn98, Asn185, and Asn208. The Proton donor role is filled by Glu274. N-linked (GlcNAc...) asparagine glycosylation occurs at Asn309. The active-site Nucleophile is Glu379. N-linked (GlcNAc...) asparagine glycosylation occurs at Asn501.

The protein belongs to the glycosyl hydrolase 30 family. Interacts with saposin-C. Interacts with SCARB2. Interacts with TCP1. Interacts with GRN; this interaction prevents aggregation of GBA1-SCARB2 complex via interaction with HSPA1A upon stress.

The protein resides in the lysosome membrane. The enzyme catalyses a beta-D-glucosyl-(1&lt;-&gt;1')-N-acylsphing-4-enine + H2O = an N-acylsphing-4-enine + D-glucose. It catalyses the reaction a beta-D-galactosyl-(1&lt;-&gt;1')-N-acylsphing-4-enine + H2O = an N-acylsphing-4-enine + D-galactose. The catalysed reaction is cholesteryl 3-beta-D-glucoside + H2O = cholesterol + D-glucose. It carries out the reaction a beta-D-glucosyl-(1&lt;-&gt;1')-N-acylsphing-4-enine + cholesterol = cholesteryl 3-beta-D-glucoside + an N-acylsphing-4-enine. The enzyme catalyses beta-D-glucosyl-N-(9Z-octadecenoyl)-sphing-4E-enine + cholesterol = N-(9Z-octadecenoyl)-sphing-4-enine + cholesteryl 3-beta-D-glucoside. It catalyses the reaction beta-D-glucosyl-N-octanoylsphing-4E-enine + cholesterol = N-octanoylsphing-4-enine + cholesteryl 3-beta-D-glucoside. The catalysed reaction is beta-D-glucosyl-N-dodecanoylsphing-4-enine + cholesterol = N-dodecanoylsphing-4-enine + cholesteryl 3-beta-D-glucoside. It carries out the reaction beta-D-glucosyl-(1&lt;-&gt;1)-N-octadecanoylsphing-4-enine + cholesterol = N-octadecanoylsphing-4-enine + cholesteryl 3-beta-D-glucoside. The enzyme catalyses beta-D-glucosyl-(1&lt;-&gt;1')-N-(15Z-tetracosenoyl)-sphing-4-enine + cholesterol = N-(15Z-tetracosenoyl)-sphing-4-enine + cholesteryl 3-beta-D-glucoside. It catalyses the reaction a beta-D-galactosyl-(1&lt;-&gt;1')-N-acylsphing-4-enine + cholesterol = cholesteryl 3-beta-D-galactoside + an N-acylsphing-4-enine. The catalysed reaction is 1-(beta-D-galactosyl)-N-dodecanoylsphing-4-enine + cholesterol = cholesteryl 3-beta-D-galactoside + N-dodecanoylsphing-4-enine. It carries out the reaction a beta-D-xylosyl-(1&lt;-&gt;1')-N-acylsphing-4-enine + cholesterol = cholesteryl 3-beta-D-xyloside + an N-acylsphing-4-enine. The enzyme catalyses beta-D-xylosyl-(1&lt;-&gt;1')-N-(9Z-octadecenoyl)-sphing-4-enine + cholesterol = cholesteryl 3-beta-D-xyloside + N-(9Z-octadecenoyl)-sphing-4-enine. It functions in the pathway steroid metabolism; cholesterol metabolism. It participates in sphingolipid metabolism. Its function is as follows. Glucosylceramidase that catalyzes, within the lysosomal compartment, the hydrolysis of glucosylceramides/GlcCers (such as beta-D-glucosyl-(1&lt;-&gt;1')-N-acylsphing-4-enine) into free ceramides (such as N-acylsphing-4-enine) and glucose. Plays a central role in the degradation of complex lipids and the turnover of cellular membranes. Through the production of ceramides, participates in the PKC-activated salvage pathway of ceramide formation. Catalyzes the glucosylation of cholesterol, through a transglucosylation reaction where glucose is transferred from GlcCer to cholesterol. GlcCer containing mono-unsaturated fatty acids (such as beta-D-glucosyl-N-(9Z-octadecenoyl)-sphing-4-enine) are preferred as glucose donors for cholesterol glucosylation when compared with GlcCer containing same chain length of saturated fatty acids (such as beta-D-glucosyl-N-octadecanoyl-sphing-4-enine). Under specific conditions, may alternatively catalyze the reverse reaction, transferring glucose from cholesteryl 3-beta-D-glucoside to ceramide. Can also hydrolyze cholesteryl 3-beta-D-glucoside producing glucose and cholesterol. Catalyzes the hydrolysis of galactosylceramides/GalCers (such as beta-D-galactosyl-(1&lt;-&gt;1')-N-acylsphing-4-enine), as well as the transfer of galactose between GalCers and cholesterol in vitro, but with lower activity than with GlcCers. Contrary to GlcCer and GalCer, xylosylceramide/XylCer (such as beta-D-xyosyl-(1&lt;-&gt;1')-N-acylsphing-4-enine) is not a good substrate for hydrolysis, however it is a good xylose donor for transxylosylation activity to form cholesteryl 3-beta-D-xyloside. The protein is Lysosomal acid glucosylceramidase (GBA1) of Bos taurus (Bovine).